A 468-amino-acid polypeptide reads, in one-letter code: ATP synthase subunit beta (468 aa).

155–162 (GGAGVGKT) is an ATP binding site.

It belongs to the ATPase alpha/beta chains family. In terms of assembly, F-type ATPases have 2 components, CF(1) - the catalytic core - and CF(0) - the membrane proton channel. CF(1) has five subunits: alpha(3), beta(3), gamma(1), delta(1), epsilon(1). CF(0) has three main subunits: a(1), b(2) and c(9-12). The alpha and beta chains form an alternating ring which encloses part of the gamma chain. CF(1) is attached to CF(0) by a central stalk formed by the gamma and epsilon chains, while a peripheral stalk is formed by the delta and b chains.

Its subcellular location is the cell membrane. The catalysed reaction is ATP + H2O + 4 H(+)(in) = ADP + phosphate + 5 H(+)(out). In terms of biological role, produces ATP from ADP in the presence of a proton gradient across the membrane. The catalytic sites are hosted primarily by the beta subunits. The sequence is that of ATP synthase subunit beta from Streptococcus sanguinis (strain SK36).